We begin with the raw amino-acid sequence, 735 residues long: Muskelin (735 aa).

An N-acetylalanine modification is found at Ala-2. Residues 172-204 (REQEAIRLCLKHFRQHNYTEAFESLQKKTKIAL) enclose the LisH domain. The 53-residue stretch at 206-258 (HPMLTDMHDKLVLKGDFDACEELIEKAVNDGLFNQYISQQEYKPRWSQIIPKS) folds into the CTLH domain. Kelch repeat units follow at residues 284 to 330 (TVYL…SCHK), 339 to 391 (QIYT…FDHQ), 400 to 458 (MIYT…SRIG), 469 to 515 (CLYV…TGFT), 526 to 578 (EIHV…SLQE), and 597 to 651 (VHYL…AQMD).

Homodimer; may form higher oligomers. Identified in the CTLH complex that contains GID4, RANBP9 and/or RANBP10, MKLN1, MAEA, RMND5A (or alternatively its paralog RMND5B), GID8, ARMC8, WDR26 and YPEL5. Within this complex, MAEA, RMND5A (or alternatively its paralog RMND5B), GID8, WDR26, and RANBP9 and/or RANBP10 form the catalytic core, while GID4, MKLN1, ARMC8 and YPEL5 have ancillary roles. Interacts with RANBP9. Part of a complex consisting of RANBP9, MKLN1 and GID8. Interacts with GABRA1. Interacts with the C-terminal tail of PTGER3.

It is found in the cytoplasm. The protein localises to the cell projection. The protein resides in the ruffle. Its subcellular location is the cell cortex. It localises to the synapse. It is found in the postsynapse. Its function is as follows. Component of the CTLH E3 ubiquitin-protein ligase complex that selectively accepts ubiquitin from UBE2H and mediates ubiquitination and subsequent proteasomal degradation of the transcription factor HBP1. Required for internalization of the GABA receptor GABRA1 from the cell membrane via endosomes and subsequent GABRA1 degradation. Acts as a mediator of cell spreading and cytoskeletal responses to the extracellular matrix component THBS1. In Rattus norvegicus (Rat), this protein is Muskelin (Mkln1).